The following is a 106-amino-acid chain: L-rhamnose mutarotase (106 aa).

Position 20 (tyrosine 20) interacts with substrate. Catalysis depends on histidine 24, which acts as the Proton donor. Substrate is bound by residues tyrosine 43 and 78-79 (WW).

This sequence belongs to the rhamnose mutarotase family. Homodimer.

It is found in the cytoplasm. The enzyme catalyses alpha-L-rhamnose = beta-L-rhamnose. The protein operates within carbohydrate degradation; L-rhamnose degradation. Its function is as follows. Involved in the anomeric conversion of L-rhamnose. The sequence is that of L-rhamnose mutarotase (rhaM) from Rhizobium leguminosarum bv. trifolii.